The chain runs to 437 residues: CMP-5'-(3-aminopropyl)phosphonate hydroxylase (437 aa).

The cofactor is FAD.

It carries out the reaction CMP-5'-(3-aminopropyl)phosphonate + NADPH + O2 = CMP-5'-(N-hydroxy-3-aminopropyl)phosphonate + NADP(+) + H2O. Its pathway is antibiotic biosynthesis. Functionally, hydroxylase involved in the biosynthesis of the phosphonate antibiotic FR-900098, a potent antimalarial agent that acts as an inhibitor of 1-deoxy-D-xylulose 5-phosphate reductoisomerase (DXR), the first enzyme in the nonmevalonate pathway for isoprenoid biosynthesis. Catalyzes the N-hydroxylation of CMP-5'-3-aminopropylphosphonate (CMP-5'-3APn) to CMP-5'-(N-hydroxy-3-aminopropyl)phosphonate (CMP-5'-H3APn). Cannot use CMP-5'-N-acetyl-3-aminopropylphosphonate (CMP-5'-Ac3APn) as a substrate. This Streptomyces rubellomurinus (strain ATCC 31215) protein is CMP-5'-(3-aminopropyl)phosphonate hydroxylase.